The sequence spans 198 residues: Recombination protein RecR (198 aa).

Residues 56-71 (CKVCGNFSEEDECVIC) form a C4-type zinc finger. The Toprim domain maps to 79-174 (GVICVVEEPK…RVSKLASGLP (96 aa)).

The protein belongs to the RecR family.

In terms of biological role, may play a role in DNA repair. It seems to be involved in an RecBC-independent recombinational process of DNA repair. It may act with RecF and RecO. The chain is Recombination protein RecR from Tropheryma whipplei (strain TW08/27) (Whipple's bacillus).